Here is a 281-residue protein sequence, read N- to C-terminus: MKQGLIGVLALALGATLLSSAVWAKTPWQEIAHPVAGTPQSIGSFSNGCIIGAQPLPLQSLDYQVMRVDQRRYFGHPDLLAFIHRLSTEVKRTTSGNVLVGDMGMPVGGRFSSGHASHQSGLDVDIWLQLPRQRWSEQQLLKPQPIDLVNASGLNVNPRVWRPEVTTLIKTAALDSDVTRIFVNPAIKKQLCAEAGHDRDWLRKVRPWFAHRAHMHVRLRCPADSLECQEQSEPPIGDGCGAELTSWFQPKQPSSEAPEKTTPPPLPPSCQALLDRHFAAR.

Positions Met-1 to Ala-24 are cleaved as a signal peptide. 3 cysteine pairs are disulfide-bonded: Cys-49–Cys-270, Cys-192–Cys-240, and Cys-221–Cys-228. Zn(2+)-binding residues include His-115, His-118, Asp-125, and His-216. A disordered region spans residues Glu-230–Gln-271. Residues Ser-246–Ser-255 show a composition bias toward polar residues.

This sequence belongs to the peptidase M74 family. Dimer. It depends on Zn(2+) as a cofactor.

Its subcellular location is the periplasm. Functionally, murein endopeptidase that cleaves the D-alanyl-meso-2,6-diamino-pimelyl amide bond that connects peptidoglycan strands. Likely plays a role in the removal of murein from the sacculus. The protein is Penicillin-insensitive murein endopeptidase (mepA) of Pectobacterium atrosepticum (strain SCRI 1043 / ATCC BAA-672) (Erwinia carotovora subsp. atroseptica).